Reading from the N-terminus, the 492-residue chain is Probable sphingolipid transporter spinster homolog 1 (492 aa).

A helical transmembrane segment spans residues 29 to 49 (FVTILCIINLINYVDRGVIAS). Residues N53 and N76 are each glycosylated (N-linked (GlcNAc...) asparagine). Helical transmembrane passes span 83 to 103 (GLLS…FAGL), 119 to 139 (VWTI…IAVF), 141 to 161 (MFVG…IDDS), 169 to 189 (FWLG…YVFG), 200 to 220 (WAFY…FCIK), 279 to 299 (VFIV…AYSY), and 317 to 337 (IFGG…SYVL). N341 carries N-linked (GlcNAc...) asparagine glycosylation. A run of 4 helical transmembrane segments spans residues 348–368 (FKLL…AFLM), 372–392 (YAFI…QAPV), 407–427 (LSMA…SSPL), and 442–462 (TLII…GIFM). Position 472 is a phosphoserine (S472). Acidic residues predominate over residues 472–481 (SEDDEVEEDK). The tract at residues 472–492 (SEDDEVEEDKLESKTENSTLA) is disordered. N488 is a glycosylation site (N-linked (GlcNAc...) asparagine).

Belongs to the major facilitator superfamily. Spinster (TC 2.A.1.49) family.

Its subcellular location is the late endosome membrane. It localises to the lysosome membrane. Probable sphingolipid transporter that plays a central role in endosomes and/or lysosomes storage. This is Probable sphingolipid transporter spinster homolog 1 from Arabidopsis thaliana (Mouse-ear cress).